A 363-amino-acid polypeptide reads, in one-letter code: Protein RecA (363 aa).

79-86 (GPESSGKT) lines the ATP pocket.

This sequence belongs to the RecA family.

The protein resides in the cytoplasm. Its function is as follows. Can catalyze the hydrolysis of ATP in the presence of single-stranded DNA, the ATP-dependent uptake of single-stranded DNA by duplex DNA, and the ATP-dependent hybridization of homologous single-stranded DNAs. It interacts with LexA causing its activation and leading to its autocatalytic cleavage. The polypeptide is Protein RecA (Methylobacterium radiotolerans (strain ATCC 27329 / DSM 1819 / JCM 2831 / NBRC 15690 / NCIMB 10815 / 0-1)).